We begin with the raw amino-acid sequence, 220 residues long: N-(5'-phosphoribosyl)anthranilate isomerase (220 aa).

This sequence belongs to the TrpF family.

It carries out the reaction N-(5-phospho-beta-D-ribosyl)anthranilate = 1-(2-carboxyphenylamino)-1-deoxy-D-ribulose 5-phosphate. The protein operates within amino-acid biosynthesis; L-tryptophan biosynthesis; L-tryptophan from chorismate: step 3/5. The sequence is that of N-(5'-phosphoribosyl)anthranilate isomerase from Xylella fastidiosa (strain M23).